The primary structure comprises 258 residues: MNSIDPRAIIDPSAKLADGVEVGPWSIVGPDVEIGEGTVIGPHVVLKGPTRIGKHNRIYQFSSIGEDTPDLKYKGEPTRLVIGDHNVIREGVTIHRGTVQDRAETTLGDHNLIMAYAHIGHDSVIGNHCILVNNTALAGHVHVGDWAILSGFTLVHQYCHIGAHAFSGMGTAIGKDVPAFVTVFGSPAEARSMNFEGMRRRGFSDEVIHALRRSYKIVYRQGLTVEEAVKELDELAGKHPEVDLFRQSIVNSARGITR.

This sequence belongs to the transferase hexapeptide repeat family. LpxA subfamily. Homotrimer.

Its subcellular location is the cytoplasm. The enzyme catalyses a (3R)-hydroxyacyl-[ACP] + UDP-N-acetyl-alpha-D-glucosamine = a UDP-3-O-[(3R)-3-hydroxyacyl]-N-acetyl-alpha-D-glucosamine + holo-[ACP]. Its pathway is glycolipid biosynthesis; lipid IV(A) biosynthesis; lipid IV(A) from (3R)-3-hydroxytetradecanoyl-[acyl-carrier-protein] and UDP-N-acetyl-alpha-D-glucosamine: step 1/6. In terms of biological role, involved in the biosynthesis of lipid A, a phosphorylated glycolipid that anchors the lipopolysaccharide to the outer membrane of the cell. The chain is Acyl-[acyl-carrier-protein]--UDP-N-acetylglucosamine O-acyltransferase from Pseudomonas putida (strain W619).